Here is a 655-residue protein sequence, read N- to C-terminus: Fidgetin-like protein 1 (655 aa).

A disordered region spans residues 289–313; sequence QQKKHSNQPQRNPGPLYGGGKKSLG. Residues alanine 385 and 425-430 contribute to the ATP site; that span reads GTGKTL.

It belongs to the AAA ATPase family. In terms of assembly, hexamer. Mg(2+) serves as cofactor.

The protein localises to the nucleus. The protein resides in the cytoplasm. It localises to the perinuclear region. The catalysed reaction is ATP + H2O = ADP + phosphate + H(+). May be involved in DNA double-strand break (DBS) repair via homologous recombination (HR). May regulate osteoblast proliferation and differentiation. The chain is Fidgetin-like protein 1 (fignl1) from Xenopus laevis (African clawed frog).